The primary structure comprises 294 residues: NAD kinase (294 aa).

D74 serves as the catalytic Proton acceptor. NAD(+) contacts are provided by residues D74 to G75, N148 to E149, H159, R176, D178, T189 to S194, and Q249.

Belongs to the NAD kinase family. A divalent metal cation serves as cofactor.

It is found in the cytoplasm. It carries out the reaction NAD(+) + ATP = ADP + NADP(+) + H(+). In terms of biological role, involved in the regulation of the intracellular balance of NAD and NADP, and is a key enzyme in the biosynthesis of NADP. Catalyzes specifically the phosphorylation on 2'-hydroxyl of the adenosine moiety of NAD to yield NADP. The polypeptide is NAD kinase (Vibrio parahaemolyticus serotype O3:K6 (strain RIMD 2210633)).